The chain runs to 239 residues: Fatty acid metabolism regulator protein (239 aa).

One can recognise an HTH gntR-type domain in the interval 6 to 74; it reads QSPAGFAEEY…HGKPTKVNNF (69 aa). Positions 34-53 form a DNA-binding region, H-T-H motif; that stretch reads ERELSELIGVTRTTLREVLQ.

As to quaternary structure, homodimer.

Its subcellular location is the cytoplasm. Its function is as follows. Multifunctional regulator of fatty acid metabolism. This is Fatty acid metabolism regulator protein from Klebsiella pneumoniae (strain 342).